The chain runs to 457 residues: PDZ and LIM domain protein 7 (457 aa).

A PDZ domain is found at 1-85 (MDSFKVVLEG…RLSLGLSRAQ (85 aa)). Residue Ser-78 is modified to Phosphoserine. Disordered stretches follow at residues 82-142 (SRAQ…LVPD), 176-226 (TEFM…PWAV), and 239-258 (TSTV…LQSR). The residue at position 103 (Arg-103) is an Asymmetric dimethylarginine. Ser-111 carries the phosphoserine modification. Over residues 208–221 (EPWPGPTAPSPTSR) the composition is skewed to pro residues. Phosphoserine is present on Ser-247. 3 LIM zinc-binding domains span residues 280–338 (PVCH…VRYA), 339–398 (PSCA…MFGT), and 399–457 (KCHG…FSHV).

As to quaternary structure, binds via its LIM zinc-binding 3 domain (LIM 3) to endocytic codes of INSR, but not with those of IGF1R, LDLR, TFRC, or EGFR. Interacts with various PKC isoforms through the LIM zinc-binding domains. Binds to RET in a phosphorylation-independent manner via its LIM zinc-binding domain 2 (LIM 2). Probably part of a complex with SHC and the RET dimer. Interacts with TPM2. Interacts with TBX4 and TBX5. Isoform 1 and isoform 2 are expressed ubiquitously, however, isoform 2 predominates in skeletal muscle, isoform 1 is more abundant in lung, spleen, leukocytes and fetal liver.

It is found in the cytoplasm. The protein localises to the cytoskeleton. Its function is as follows. May function as a scaffold on which the coordinated assembly of proteins can occur. May play a role as an adapter that, via its PDZ domain, localizes LIM-binding proteins to actin filaments of both skeletal muscle and nonmuscle tissues. Involved in both of the two fundamental mechanisms of bone formation, direct bone formation (e.g. embryonic flat bones mandible and cranium), and endochondral bone formation (e.g. embryonic long bone development). Plays a role during fracture repair. Involved in BMP6 signaling pathway. The chain is PDZ and LIM domain protein 7 (PDLIM7) from Homo sapiens (Human).